Here is a 464-residue protein sequence, read N- to C-terminus: METEQPEETFPNTETNGEFGKRPAEDMEEEQAFKRSRNTDEMVELRILLQSKNAGAVIGKGGKNIKALRTDYNASVSVPDSSGPERILSISADIETIGEILKKIIPTLEEGLQLPSPTATSQLPLESDAVECLNYQHYKGSDFDCELRLLIHQSLAGGIIGVKGAKIKELRENTQTTIKLFQECCPHSTDRVVLIGGKPDRVVECIKIILDLISESPIKGRAQPYDPNFYDETYDYGGFTMMFDDRRGRPVGFPMRGRGGFDRMPPGRGGRPMPPSRRDYDDMSPRRGPPPPPPGRGGRGGSRARNLPLPPPPPPRGGDLMAYDRRGRPGDRYDGMVGFSADETWDSAIDTWSPSEWQMAYEPQGGSGYDYSYAGGRGSYGDLGGPIITTQVTIPKDLAGSIIGKGGQRIKQIRHESGASIKIDEPLEGSEDRIITITGTQDQIQNAQYLLQNSVKQYADVEGF.

Met1 carries the N-acetylmethionine modification. Positions 1 to 37 (METEQPEETFPNTETNGEFGKRPAEDMEEEQAFKRSR) are disordered. A necessary for interaction with DDX1 region spans residues 1–276 (METEQPEETF…GRGGRPMPPS (276 aa)). Basic and acidic residues predominate over residues 19–37 (FGKRPAEDMEEEQAFKRSR). Position 34 is an N6-acetyllysine; alternate (Lys34). Residue Lys34 forms a Glycyl lysine isopeptide (Lys-Gly) (interchain with G-Cter in SUMO1); alternate linkage. Residue Lys34 forms a Glycyl lysine isopeptide (Lys-Gly) (interchain with G-Cter in SUMO2); alternate linkage. Position 36 is a phosphoserine (Ser36). Position 39 is a phosphothreonine (Thr39). One can recognise a KH 1 domain in the interval 42–104 (MVELRILLQS…ETIGEILKKI (63 aa)). Glycyl lysine isopeptide (Lys-Gly) (interchain with G-Cter in SUMO2) cross-links involve residues Lys52 and Lys60. 2 tandem repeats follow at residues 54-76 (AGAV…NASV) and 59-62 (GKGG). Residues 54–421 (AGAVIGKGGK…QIRHESGASI (368 aa)) form a 2 X 22 AA approximate repeats region. Positions 59–407 (GKGGKNIKAL…LAGSIIGKGG (349 aa)) are 5 X 4 AA repeats of G-X-G-G. Phosphoserine is present on residues Ser75 and Ser116. The KH 2 domain maps to 144–209 (DCELRLLIHQ…DRVVECIKII (66 aa)). Lys163 participates in a covalent cross-link: Glycyl lysine isopeptide (Lys-Gly) (interchain with G-Cter in SUMO1); alternate. A Glycyl lysine isopeptide (Lys-Gly) (interchain with G-Cter in SUMO2); alternate cross-link involves residue Lys163. At Lys198 the chain carries N6-acetyllysine. Phosphoserine occurs at positions 214 and 216. Lys219 is covalently cross-linked (Glycyl lysine isopeptide (Lys-Gly) (interchain with G-Cter in SUMO2); alternate). Lys219 is subject to N6-succinyllysine; alternate. Positions 236–273 (YGGFTMMFDDRRGRPVGFPMRGRGGFDRMPPGRGGRPM) are RNA-binding RGG-box. 3 consecutive repeat copies span residues 245–250 (DRRGRP), 257–260 (GRGG), and 267–270 (GRGG). The segment at 245 to 329 (DRRGRPVGFP…LMAYDRRGRP (85 aa)) is 2 X 6 AA approximate repeats. Positions 250–329 (PVGFPMRGRG…LMAYDRRGRP (80 aa)) are disordered. Over residues 252–266 (GFPMRGRGGFDRMPP) the composition is skewed to low complexity. Residues 276-285 (SRRDYDDMSP) show a composition bias toward basic and acidic residues. A Phosphoserine modification is found at Ser284. A 3-4 repeat occupies 295 to 298 (GRGG). Arg316 is subject to Omega-N-methylarginine. The stretch at 324–329 (DRRGRP) is one 2-2 repeat. Position 377 is an omega-N-methylarginine (Arg377). A Phosphoserine modification is found at Ser379. Position 380 is a phosphotyrosine (Tyr380). Residues 387-451 (IITTQVTIPK…DQIQNAQYLL (65 aa)) form the KH 3 domain. Tandem repeats lie at residues 399–421 (AGSI…GASI) and 404–407 (GKGG). Lys405 bears the N6-acetyllysine; alternate mark. Residue Lys405 forms a Glycyl lysine isopeptide (Lys-Gly) (interchain with G-Cter in SUMO2); alternate linkage. Ser420 bears the Phosphoserine mark. A Glycyl lysine isopeptide (Lys-Gly) (interchain with G-Cter in SUMO1); alternate cross-link involves residue Lys422. Lys422 participates in a covalent cross-link: Glycyl lysine isopeptide (Lys-Gly) (interchain with G-Cter in SUMO2); alternate. Lys422 participates in a covalent cross-link: Glycyl lysine isopeptide (Lys-Gly) (interchain with G-Cter in SUMO); alternate.

Identified in the spliceosome C complex. Interacts with ANKRD28, RBM42 and ZIK1. Interacts with DDX1. Interacts with MDM2; this interaction leads to ubiquitination and proteasomal degradation. Interacts with p53/TP53. Interacts with BRDT. Interacts with IVNS1ABP. Interacts with PPIA/CYPA. Part of a transcription inhibitory ribonucleoprotein complex composed at least of the circular RNA circZNF827, ZNF827 and HNRNPL. In terms of processing, sumoylated by CBX4. Sumoylation is increased upon DNA damage, such as that produced by doxorubicin, etoposide, UV light and camptothecin, due to enhanced CBX4 phosphorylation by HIPK2 under these conditions. Ubiquitinated by MDM2. Doxorubicin treatment does not affect monoubiquitination, but slightly decreases HNRNPK poly-ubiquitination. Post-translationally, O-glycosylated (O-GlcNAcylated), in a cell cycle-dependent manner.

It is found in the cytoplasm. It localises to the nucleus. The protein resides in the nucleoplasm. Its subcellular location is the cell projection. The protein localises to the podosome. Its function is as follows. One of the major pre-mRNA-binding proteins. Binds tenaciously to poly(C) sequences. Likely to play a role in the nuclear metabolism of hnRNAs, particularly for pre-mRNAs that contain cytidine-rich sequences. Can also bind poly(C) single-stranded DNA. Plays an important role in p53/TP53 response to DNA damage, acting at the level of both transcription activation and repression. When sumoylated, acts as a transcriptional coactivator of p53/TP53, playing a role in p21/CDKN1A and 14-3-3 sigma/SFN induction. As far as transcription repression is concerned, acts by interacting with long intergenic RNA p21 (lincRNA-p21), a non-coding RNA induced by p53/TP53. This interaction is necessary for the induction of apoptosis, but not cell cycle arrest. As part of a ribonucleoprotein complex composed at least of ZNF827, HNRNPL and the circular RNA circZNF827 that nucleates the complex on chromatin, may negatively regulate the transcription of genes involved in neuronal differentiation. The chain is Heterogeneous nuclear ribonucleoprotein K (HNRNPK) from Macaca fascicularis (Crab-eating macaque).